We begin with the raw amino-acid sequence, 1294 residues long: Voltage-gated inwardly rectifying potassium channel KCNH2 (1294 aa).

Residues 1 to 377 (RKFIIANARV…RIHRWTILHY (377 aa)) are Cytoplasmic-facing. One can recognise a PAS domain in the interval 15 to 44 (VIYCNDGFCELCGYSRAEVMQRPCTCDFLH). In terms of domain architecture, PAC spans 66–118 (RKVEIAFYRKDGSCFLCLVDVVPVKNEDGAVIMFILNFEVVMEKDMVGSPARD). The interval 207–258 (LVAPGSPPSSVPGPPHTSPRAHSLNPDASGSSCSLARTRSRESCASVRRASS) is disordered. Residues 211-223 (GSPPSSVPGPPHT) show a composition bias toward pro residues. Residues Ser212 and Ser216 each carry the phosphoserine modification. Residues 232-243 (PDASGSSCSLAR) show a composition bias toward polar residues. Ser257, Ser258, Ser294, and Ser325 each carry phosphoserine. A helical membrane pass occupies residues 378–398 (SPFKAVWDWLILLLVIYTAVF). Residues 399–424 (TPYSAAFLLKEPEEDAQTADCGYACQ) are Extracellular-facing. A helical membrane pass occupies residues 425–445 (PLAVVDLIVDIMFIVDILINF). The Cytoplasmic portion of the chain corresponds to 446 to 469 (RTTYVNANEEVVSHPGRIAVHYFK). The chain crosses the membrane as a helical span at residues 470–490 (GWFLIDMVAAIPFDLLIFGSG). At 491–494 (SEEL) the chain is on the extracellular side. A helical; Voltage-sensor membrane pass occupies residues 495 to 515 (IGLLKTARLLRLVRVARKLDR). At 516-521 (YSEYGA) the chain is on the cytoplasmic side. Residues 522–542 (AVLFLLMCTFALIAHWLACIW) form a helical membrane-spanning segment. Residues 543-585 (YAIGNMEQPDMNSRIGWLHNLGDQIGKPYNSSGLGGPSIKDKY) are Extracellular-facing. The pore-forming intramembrane region spans 586-606 (VTALYFTFSSLTSVGFGNVSP). The short motif at 598-603 (SVGFGN) is the Selectivity filter element. Residues 607–612 (NTNSEK) are Extracellular-facing. The helical transmembrane segment at 613 to 633 (IFSICVMLIGSLMYASIFGNV) threads the bilayer. Residues 634–1294 (SAIIQRLYSG…IAHWLACIWY (661 aa)) are Cytoplasmic-facing. A cNMP-binding domain region spans residues 716–816 (PFRGATKGCL…IHRDDLLEVL (101 aa)). The disordered stretch occupies residues 844 to 956 (GSPGSTELEG…LTEDGDKSDT (113 aa)). 2 positions are modified to phosphoserine: Ser845 and Ser848. The span at 857 to 866 (RQRRRKLSFR) shows a compositional bias: basic residues. Residues 902–913 (GDSPSSGPSSPE) show a composition bias toward low complexity. The residue at position 987 (Arg987) is an Omega-N-methylarginine. Residues 1008-1035 (RGDVESRLDALQRQLNRLETRLSADMAT) adopt a coiled-coil conformation. Ser1110 carries the post-translational modification Phosphoserine.

The protein belongs to the potassium channel family. H (Eag) (TC 1.A.1.20) subfamily. Kv11.1/KCNH2 sub-subfamily. As to quaternary structure, the potassium channel is probably composed of a homo- or heterotetrameric complex of pore-forming alpha subunits that can associate with modulating beta subunits. Interacts with DNAJB12 and DNAJB14; chaperones DNAJB12 and DNAJB14 promote tetramerization. Heteromultimer with KCNH6/ERG2 and KCNH7/ERG3. Interacts with ALG10B. Forms a stable complex with KCNE1 or KCNE2, and that this heteromultimerization regulates Inward rectifier potassium channel activity. Interacts with CANX. The core-glycosylated, but not the fully glycosylated form interacts with RNF207. Interacts with NDFIP1 and NDFIP2; this interaction decreases the cell membrane expression by targeting KCNH2, through interaction with NEDD4L, for the degradation through the multivesicular bodies (MVBs)-lysosomal pathway. Phosphorylated on serine and threonine residues. Phosphorylation by PKA inhibits ion conduction. In terms of tissue distribution, highly expressed in heart and brain.

It is found in the cell membrane. The enzyme catalyses K(+)(in) = K(+)(out). Pore-forming (alpha) subunit of voltage-gated inwardly rectifying potassium channel. Characterized by unusual gating kinetics by producing relatively small outward currents during membrane depolarization and large inward currents during subsequent repolarization which reflect a rapid inactivation during depolarization and quick recovery from inactivation but slow deactivation (closing) during repolarization. Channel properties are modulated by cAMP and subunit assembly. Forms a stable complex with KCNE1 or KCNE2, and that this heteromultimerization regulates inward rectifier potassium channel activity. This chain is Voltage-gated inwardly rectifying potassium channel KCNH2, found in Cavia porcellus (Guinea pig).